A 353-amino-acid polypeptide reads, in one-letter code: UPF0283 membrane protein YcjF (353 aa).

Basic and acidic residues predominate over residues 1–19 (MSEPLKPRIDFAEPLKEEP). Residues 1-35 (MSEPLKPRIDFAEPLKEEPTSAFKAQQTFSEAESR) form a disordered region. A run of 3 helical transmembrane segments spans residues 70 to 90 (MVMG…VQWT), 100 to 120 (VALG…GSVV), and 213 to 233 (ESTL…FIAW).

The protein belongs to the UPF0283 family.

It localises to the cell inner membrane. The polypeptide is UPF0283 membrane protein YcjF (Salmonella newport (strain SL254)).